A 637-amino-acid chain; its full sequence is DNA mismatch repair protein MutL (637 aa).

Residues 353-371 (GQGQRPVSSASMPSASRQA) show a composition bias toward polar residues. Positions 353-444 (GQGQRPVSSA…SEAASETPHD (92 aa)) are disordered. The segment covering 378-389 (DWIKEGVQDWDW) has biased composition (basic and acidic residues). Pro residues predominate over residues 396–406 (PQNPPQNPPPG). Over residues 430-444 (SGKELSEAASETPHD) the composition is skewed to basic and acidic residues.

It belongs to the DNA mismatch repair MutL/HexB family.

Functionally, this protein is involved in the repair of mismatches in DNA. It is required for dam-dependent methyl-directed DNA mismatch repair. May act as a 'molecular matchmaker', a protein that promotes the formation of a stable complex between two or more DNA-binding proteins in an ATP-dependent manner without itself being part of a final effector complex. This chain is DNA mismatch repair protein MutL, found in Beijerinckia indica subsp. indica (strain ATCC 9039 / DSM 1715 / NCIMB 8712).